The primary structure comprises 195 residues: Glucagon family neuropeptides (195 aa).

Positions 1 to 20 are cleaved as a signal peptide; that stretch reads MAKSSRATLALLIYGILMRY. Residues 21-82 constitute a propeptide that is removed on maturation; it reads SQCTPIGMGF…YYPPERRAET (62 aa). The segment at 113-132 is disordered; sequence VGEEEEDEEDSEPLSKRHSD. The span at 115–124 shows a compositional bias: acidic residues; it reads EEEEDEEDSE. The residue at position 167 (K167) is a Lysine amide. The propeptide occupies 171–195; sequence LVVPSVWTGIRDTVIITPEKRGKRY.

Belongs to the glucagon family. As to expression, brain, testis, ovary and stomach. Not pancreas, pituitary, muscle and liver.

The protein localises to the secreted. Its function is as follows. Primary role of GHRH is to release GH from the pituitary. Functionally, PACAP plays pivotal roles as a neurotransmitter and/or a neuromodulator. In Clarias macrocephalus (Bighead catfish), this protein is Glucagon family neuropeptides.